The chain runs to 546 residues: Pyridine nucleotide-disulfide oxidoreductase domain-containing protein 1 (546 aa).

Belongs to the class-I pyridine nucleotide-disulfide oxidoreductase family. PYROXD1 subfamily. It depends on FAD as a cofactor.

The sequence is that of Pyridine nucleotide-disulfide oxidoreductase domain-containing protein 1 (pyroxd1) from Dictyostelium discoideum (Social amoeba).